A 988-amino-acid polypeptide reads, in one-letter code: Exportin-T (988 aa).

The protein belongs to the exportin family.

Its subcellular location is the nucleus. The protein localises to the cytoplasm. TRNA nucleus export receptor which facilitates tRNA translocation across the nuclear pore complex. Involved in pre-tRNA splicing, probably by affecting the interaction of pre-tRNA with splicing endonuclease. The polypeptide is Exportin-T (LOS1) (Lodderomyces elongisporus (strain ATCC 11503 / CBS 2605 / JCM 1781 / NBRC 1676 / NRRL YB-4239) (Yeast)).